The following is a 189-amino-acid chain: Chitin synthase 1 (189 aa).

Belongs to the chitin synthase family. Class I subfamily.

It is found in the cell membrane. The catalysed reaction is [(1-&gt;4)-N-acetyl-beta-D-glucosaminyl](n) + UDP-N-acetyl-alpha-D-glucosamine = [(1-&gt;4)-N-acetyl-beta-D-glucosaminyl](n+1) + UDP + H(+). Its function is as follows. Polymerizes chitin, a structural polymer of the cell wall and septum, by transferring the sugar moiety of UDP-GlcNAc to the non-reducing end of the growing chitin polymer. This is Chitin synthase 1 (CHS1) from Rhinocladiella atrovirens.